The following is a 2096-amino-acid chain: MSTALAQQLQKLAAPQSSVTLADARSRASILFDPKEAATKDRRSIYEIGLTGLQELTDFNPAFKEFQLTLFDEATLTLERSVELPEINKMLDAAIAKFLRLLSPYLLLRPAHMAFEWLLRRFQVHEYNRSEVMALILPYHETMIFVQIVKTMRLRSSDGDWYWLRPLQRPGVPLAKTAIINRAASNPAFLGFICQSTQKAVKELGPRAHQLQAQINFYATVVVGALQTAKPLQDWHITTILESLLRGLISDNIDFMAAAYVIVAQLVSRTKLKSKVCNALLERVANCPFERLHSESLLLLVCIYGKQQAALPHFKPETILNLVGKKWLISTLSSLAKGNIAIQSICMPLMTGAVAAIRDDDASSNSCKLFLDNLLSEVPMPKPTAQQLINCFLDTYVETAIDAPEPMETNSNEDDDTIVIDSDDEIETEKTTFQAWYSTYLEKLERRYPEAFDLSVKEALRSKSSTSNRQKALKLALGFRLNTTDEKAKHAYEKLYHYSADWRLSAVQKLLQNLNVTKKRERSVKLLQECLPDRINDDSGAVVSTLLSLPTEELAEMLGPLPLAQTLCHLLYRAQSEKDEEWQPVVPLAVRHLTSALVSGSYDTNLVLLALMPLLFPGEALAEHQHKALRILLGSDFVSKVPFLAELKVSNKFSDFNVGEHRQHFLDIIASSNQELSSQERALLQSVEDHGGELYIQKASQLTHLLLLLTAYAKRELQPRESLHMLEKIGLYSRRLQFRVVNGSQNTQNCAPLQLYVDFLLTLVKNTKWTALASTPWNQMTDELRLCLRLLEIICAQVFSEKADQPERQEWTRALQQSLQLILPEAQDRLEVLSNFYVFERLPELWPRDSDYAVFRLQGFIILEAVLSNPKSQIDCGLVHVLRVANACGSPLQTLRVQAINILQLISNRKLVSHVEQLVRSLLQRKSELSMDHEQYALILYTILEPEKATAKERLVLSKLKRSVLALASDPKQSPICTASLLAALKHVNDENFLNELLPLGLDSLKTITAGEDNQNIKQLPWPHSEIYKSVIERFEGRVALNVLLRKDLAWKLFEDSFAQYDTYVQLEQKLQPLPCVLLNSLTPETFEQMHAKHKIALIKLIVESATNSDNDSIFLASHRLLKRCRLDCQPLVPILLEMANTKVEKKQPVKRRSVQATQLDLTSPYWKQGMTLLELLEHKKQLVGAELLIPPLFELLQACLTMEEHSAAEYPKQLILSSLLHCCQTAQSAGVQLVKAMPESSFRIELVVQSLRNTRNPQTQQHALLFLTHCAGMYPQQVLHKIVEIFTFVGSTVARHDDAFSLHIIHNVVESIIPILLLNTGHNELVIPVLKVFADICTDVPVHRRLPLYATLFRVLEPKEHLWQFLCIIFESQVLLEQVPQKVSTDKSRLDFARELTLMFEDPTVAIQTCIRLLDYLAKLPATKSSLSGGSGSSVLSTEQQLFDVRTRTFKQLRHYKYLIMDFLSGISSCNEWEKKMKRPDPNELLPYYQEFILKTLAYVGVLNGALEAASETPSLEKFWRVLANHAHDVLDNAIGLLAPQHFISVITELLKHDHVYVRIKVMDLLVTKLSPSSDYFQQSNAEHFGVLFAPLQEIINGILEGSSNSAQQAKLQQTALHALQLLALRHGRDYIEECRSLLATLTKITKRRANVPKAVVGNVVLTLVEICASLKAHALAQLPKFAPQLTELLKEQVHQMASLKQGPDYVCSTLVTALHKLFKALPLFLGPYLVDIIGGLARLSVQLENPQLLQDKRTQVLKQKLADVWSAVAQGVEVRILVPSCAKAFSSLLEQQAYDELGHLMQQLLLQSVRHNSAAQLQPVQDPLSELFLQALNFRLQVRGLGLQRQLVSDVEASITETFVTWILKLSETSFRPMYSRVHKWALESTSRETRLTYFLLTNRIAEALKSLFVLFASDFVEDSSRLLTEHNSIRPEFEVEEREDDVDLLMAILNTLHHVFLYCSEDFINDHRFNVLMPPLVNQLENDLVLGNESLQQVLSNCIAQFAVATNDVMWKQLNSQVLLKTRTSNPEVRILAFNSCVAIARKLGESYAALLPETVPFIAELLEDEHQRVEKNTRTGVQELETILGESVQKYL.

The stretch at 2058-2096 (TVPFIAELLEDEHQRVEKNTRTGVQELETILGESVQKYL) is one HEAT repeat.

It belongs to the HEATR1/UTP10 family. Part of the small subunit (SSU) processome, composed of more than 70 proteins and the RNA chaperone small nucleolar RNA (snoRNA) U3. Interacts with MYC; the interaction is required for localization of MYC to the nucleolus.

It localises to the nucleus. It is found in the nucleolus. Functionally, ribosome biogenesis factor; required for recruitment of Myc to nucleoli. Involved in nucleolar processing of pre-18S ribosomal RNA. Required for optimal pre-ribosomal RNA transcription by RNA polymerase I. Part of the small subunit (SSU) processome, first precursor of the small eukaryotic ribosomal subunit. During the assembly of the SSU processome in the nucleolus, many ribosome biogenesis factors, an RNA chaperone and ribosomal proteins associate with the nascent pre-rRNA and work in concert to generate RNA folding, modifications, rearrangements and cleavage as well as targeted degradation of pre-ribosomal RNA by the RNA exosome. Involved in neuronal-lineage cell proliferation during larval development. The chain is HEAT repeat-containing protein 1 homolog from Drosophila melanogaster (Fruit fly).